The primary structure comprises 456 residues: tRNA(Ile)-lysidine synthase (456 aa).

Residue 28–33 participates in ATP binding; the sequence is SGGSDS.

Belongs to the tRNA(Ile)-lysidine synthase family.

It is found in the cytoplasm. It carries out the reaction cytidine(34) in tRNA(Ile2) + L-lysine + ATP = lysidine(34) in tRNA(Ile2) + AMP + diphosphate + H(+). Ligates lysine onto the cytidine present at position 34 of the AUA codon-specific tRNA(Ile) that contains the anticodon CAU, in an ATP-dependent manner. Cytidine is converted to lysidine, thus changing the amino acid specificity of the tRNA from methionine to isoleucine. The sequence is that of tRNA(Ile)-lysidine synthase from Brucella anthropi (strain ATCC 49188 / DSM 6882 / CCUG 24695 / JCM 21032 / LMG 3331 / NBRC 15819 / NCTC 12168 / Alc 37) (Ochrobactrum anthropi).